Consider the following 254-residue polypeptide: Gamma-glutamyl-gamma-aminobutyrate hydrolase (254 aa).

Residues 16–250 form the Glutamine amidotransferase type-1 domain; the sequence is RNRLKGHATQ…ITACQHHIAE (235 aa). The active-site Nucleophile is the Cys-114. Active-site residues include His-222 and Glu-224.

Belongs to the peptidase C26 family.

It carries out the reaction 4-(gamma-L-glutamylamino)butanoate + H2O = 4-aminobutanoate + L-glutamate. Its pathway is amine and polyamine degradation; putrescine degradation; 4-aminobutanoate from putrescine: step 4/4. In terms of biological role, involved in the breakdown of putrescine via hydrolysis of the gamma-glutamyl linkage of gamma-glutamyl-gamma-aminobutyrate. This Escherichia coli O157:H7 protein is Gamma-glutamyl-gamma-aminobutyrate hydrolase (puuD).